The chain runs to 243 residues: Small ribosomal subunit protein uS2 (243 aa).

It belongs to the universal ribosomal protein uS2 family.

The polypeptide is Small ribosomal subunit protein uS2 (Pseudoalteromonas atlantica (strain T6c / ATCC BAA-1087)).